Here is a 228-residue protein sequence, read N- to C-terminus: Claudin-10 (228 aa).

The helical transmembrane segment at methionine 1–valine 21 threads the bilayer. At serine 22–arginine 80 the chain is on the extracellular side. The helical transmembrane segment at glycine 81–methionine 101 threads the bilayer. Residues lysine 102–lysine 115 are Cytoplasmic-facing. The chain crosses the membrane as a helical span at residues isoleucine 116–serine 136. Topologically, residues leucine 137–alanine 160 are extracellular. Residues alanine 161–phenylalanine 181 traverse the membrane as a helical segment. At serine 182–valine 228 the chain is on the cytoplasmic side.

The protein belongs to the claudin family. Can form homodimers both in trans (interaction between CLDN10 molecules in opposing membranes) and in cis (interaction between CLDN10 molecules within one membrane). Interacts with CLDN19.

Its subcellular location is the cell junction. It is found in the tight junction. It localises to the cell membrane. The catalysed reaction is Na(+)(in) = Na(+)(out). It carries out the reaction Li(+)(in) = Li(+)(out). The enzyme catalyses K(+)(in) = K(+)(out). It catalyses the reaction Rb(+)(in) = Rb(+)(out). The catalysed reaction is Cs(+)(in) = Cs(+)(out). It carries out the reaction NH4(+)(in) = NH4(+)(out). The enzyme catalyses methylamine(out) = methylamine(in). It catalyses the reaction Mg(2+)(in) = Mg(2+)(out). The catalysed reaction is Ca(2+)(in) = Ca(2+)(out). It carries out the reaction Sr(2+)(in) = Sr(2+)(out). The enzyme catalyses chloride(in) = chloride(out). It catalyses the reaction nitrate(in) = nitrate(out). Forms paracellular channels: polymerizes in tight junction strands with cation- and anion-selective channels through the strands, conveying epithelial permeability in a process known as paracellular tight junction permeability. In sweat glands and in the thick ascending limb (TAL) of Henle's loop in kidney, it controls paracellular sodium permeability which is essential for proper sweat production and renal function. In renal proximal tubules, it conveys selective chloride over hydrogencarbonate anion permeability which is required for renal chloride reabsorption and salt homeostasis. In Pongo abelii (Sumatran orangutan), this protein is Claudin-10 (CLDN10).